The following is a 535-amino-acid chain: Bifunctional purine biosynthesis protein PurH (535 aa).

Residues 6 to 151 enclose the MGS-like domain; it reads TRLPIRRALI…KNHKDVAIVV (146 aa).

This sequence belongs to the PurH family.

It catalyses the reaction (6R)-10-formyltetrahydrofolate + 5-amino-1-(5-phospho-beta-D-ribosyl)imidazole-4-carboxamide = 5-formamido-1-(5-phospho-D-ribosyl)imidazole-4-carboxamide + (6S)-5,6,7,8-tetrahydrofolate. It carries out the reaction IMP + H2O = 5-formamido-1-(5-phospho-D-ribosyl)imidazole-4-carboxamide. It participates in purine metabolism; IMP biosynthesis via de novo pathway; 5-formamido-1-(5-phospho-D-ribosyl)imidazole-4-carboxamide from 5-amino-1-(5-phospho-D-ribosyl)imidazole-4-carboxamide (10-formyl THF route): step 1/1. The protein operates within purine metabolism; IMP biosynthesis via de novo pathway; IMP from 5-formamido-1-(5-phospho-D-ribosyl)imidazole-4-carboxamide: step 1/1. The protein is Bifunctional purine biosynthesis protein PurH of Pseudomonas fluorescens (strain SBW25).